The primary structure comprises 411 residues: MVKRNVHLTKLQSGYLFPEINRRKNEFLKKHPSAQLINLGIGDTTQPIPLYISEAMQNFAKQLASEKTYRGYGTEQGSILLREAIAEQYYQGKIDPQEVFVSDGSKCDVGRLQILFGSDATIAVQNPTYPAYVDTGVINGQASFFQTSTKQYQRITYMSCLPENNFFPDLANLPKTDLIYFCSPNNPTGSAATNEQLRELVQFAKKRQSIIIFDAAYASFVRSSHIPRSIYEIEGAKEVAIEVGSFSKMIGFTGVRLGWSVVPKQLRFEDGHSVQQDWERIVCTFFNGASNIAQAGGLAALQKEGLQAIDELSSYYMKNSNILKKAFEECGYKVYGGENVPYLWVHFPQLTSWEAFEILLKQSQLVSVPGSGFGSAGEGFLRFSAFGKQSDITVALPRIKHALLKIKPTVY.

Residues Y15 and G42 each contribute to the substrate site. Pyridoxal 5'-phosphate contacts are provided by residues Y72, 105 to 106 (SK), Y129, N186, Y217, and 245 to 247 (SFS). Substrate contacts are provided by K106, Y129, and N186. K248 carries the post-translational modification N6-(pyridoxal phosphate)lysine. 2 residues coordinate pyridoxal 5'-phosphate: R256 and N287. Substrate is bound by residues N287 and R382.

Belongs to the class-I pyridoxal-phosphate-dependent aminotransferase family. LL-diaminopimelate aminotransferase subfamily. As to quaternary structure, homodimer. The cofactor is pyridoxal 5'-phosphate.

It carries out the reaction (2S,6S)-2,6-diaminopimelate + 2-oxoglutarate = (S)-2,3,4,5-tetrahydrodipicolinate + L-glutamate + H2O + H(+). It functions in the pathway amino-acid biosynthesis; L-lysine biosynthesis via DAP pathway; LL-2,6-diaminopimelate from (S)-tetrahydrodipicolinate (aminotransferase route): step 1/1. In terms of biological role, involved in the synthesis of meso-diaminopimelate (m-DAP or DL-DAP), required for both lysine and peptidoglycan biosynthesis. Catalyzes the direct conversion of tetrahydrodipicolinate to LL-diaminopimelate. Is also able to use meso-diaminopimelate, lysine or ornithine as substrates. In Protochlamydia amoebophila (strain UWE25), this protein is LL-diaminopimelate aminotransferase.